Here is a 358-residue protein sequence, read N- to C-terminus: Phosphoserine aminotransferase (358 aa).

Arg41 lines the L-glutamate pocket. Residues 75 to 76 (AS), Trp100, Thr148, Asp167, and Gln190 each bind pyridoxal 5'-phosphate. An N6-(pyridoxal phosphate)lysine modification is found at Lys191. 233–234 (NT) contributes to the pyridoxal 5'-phosphate binding site.

Belongs to the class-V pyridoxal-phosphate-dependent aminotransferase family. SerC subfamily. As to quaternary structure, homodimer. The cofactor is pyridoxal 5'-phosphate.

It localises to the cytoplasm. The enzyme catalyses O-phospho-L-serine + 2-oxoglutarate = 3-phosphooxypyruvate + L-glutamate. It catalyses the reaction 4-(phosphooxy)-L-threonine + 2-oxoglutarate = (R)-3-hydroxy-2-oxo-4-phosphooxybutanoate + L-glutamate. It functions in the pathway amino-acid biosynthesis; L-serine biosynthesis; L-serine from 3-phospho-D-glycerate: step 2/3. It participates in cofactor biosynthesis; pyridoxine 5'-phosphate biosynthesis; pyridoxine 5'-phosphate from D-erythrose 4-phosphate: step 3/5. In terms of biological role, catalyzes the reversible conversion of 3-phosphohydroxypyruvate to phosphoserine and of 3-hydroxy-2-oxo-4-phosphonooxybutanoate to phosphohydroxythreonine. The chain is Phosphoserine aminotransferase from Campylobacter lari (strain RM2100 / D67 / ATCC BAA-1060).